Consider the following 748-residue polypeptide: Bifunctional lysine-specific demethylase and histidyl-hydroxylase NO66 (748 aa).

Disordered stretches follow at residues 65-135 (NIDR…RSTY) and 160-264 (TEVV…DDEG). Residues 94-110 (LENKKPKVEVKKEDEKS) show a composition bias toward basic and acidic residues. Positions 124-134 (LVQNETSTRST) are enriched in polar residues. Positions 163–193 (VESDDEQMIGLDSDEELEDEDETDIDEDEMM) are enriched in acidic residues. The span at 194-203 (IDPKDIERYI) shows a compositional bias: basic and acidic residues. The span at 207–264 (SVEDEEDMEDEEIEDEEFEDEEFEDEEEEADEQEEEEEDVSDEESVVSEMDADSDDEG) shows a compositional bias: acidic residues. The JmjC domain occupies 399 to 543 (QLVNPQTYDD…NLMEKVVPEA (145 aa)). Fe cation contacts are provided by histidine 442, aspartate 444, and histidine 509.

The protein belongs to the ROX family. NO66 subfamily. It depends on Fe(2+) as a cofactor.

It is found in the nucleus. The catalysed reaction is N(6),N(6)-dimethyl-L-lysyl(36)-[histone H3] + 2 2-oxoglutarate + 2 O2 = L-lysyl(36)-[histone H3] + 2 formaldehyde + 2 succinate + 2 CO2. Functionally, oxygenase that can act as both a histone lysine demethylase and a ribosomal histidine hydroxylase. Specifically demethylates 'Lys-4' (H3K4me) and 'Lys-36' (H3K36me) of histone H3, thereby playing a central role in histone code. Mediates response to multiple stress stimuli, including heat shock and osmotic, oxidative, and ethanol stress. This is Bifunctional lysine-specific demethylase and histidyl-hydroxylase NO66 (jmjc-1) from Caenorhabditis elegans.